The following is a 98-amino-acid chain: Small ribosomal subunit protein uS19c (98 aa).

This sequence belongs to the universal ribosomal protein uS19 family.

It localises to the plastid. It is found in the chloroplast. Functionally, protein S19 forms a complex with S13 that binds strongly to the 16S ribosomal RNA. In Jasminum nudiflorum (Winter jasmine), this protein is Small ribosomal subunit protein uS19c.